Here is a 159-residue protein sequence, read N- to C-terminus: Transcription elongation factor GreA (159 aa).

Positions 43-75 (LSENAEYDAAREEQSQLEAKIGEIENKLASATI) form a coiled coil.

Belongs to the GreA/GreB family.

Functionally, necessary for efficient RNA polymerase transcription elongation past template-encoded arresting sites. The arresting sites in DNA have the property of trapping a certain fraction of elongating RNA polymerases that pass through, resulting in locked ternary complexes. Cleavage of the nascent transcript by cleavage factors such as GreA or GreB allows the resumption of elongation from the new 3'terminus. GreA releases sequences of 2 to 3 nucleotides. This Chlorobaculum tepidum (strain ATCC 49652 / DSM 12025 / NBRC 103806 / TLS) (Chlorobium tepidum) protein is Transcription elongation factor GreA.